Here is a 208-residue protein sequence, read N- to C-terminus: GTP cyclohydrolase 1 (208 aa).

Zn(2+) is bound by residues Cys98, His101, and Cys169.

Belongs to the GTP cyclohydrolase I family. As to quaternary structure, toroid-shaped homodecamer, composed of two pentamers of five dimers.

It carries out the reaction GTP + H2O = 7,8-dihydroneopterin 3'-triphosphate + formate + H(+). The protein operates within cofactor biosynthesis; 7,8-dihydroneopterin triphosphate biosynthesis; 7,8-dihydroneopterin triphosphate from GTP: step 1/1. The sequence is that of GTP cyclohydrolase 1 from Agrobacterium fabrum (strain C58 / ATCC 33970) (Agrobacterium tumefaciens (strain C58)).